Here is a 1220-residue protein sequence, read N- to C-terminus: Spike glycoprotein (1220 aa).

The N-terminal stretch at 1–15 is a signal peptide; that stretch reads MWLITILATISCVTA. The Virion surface portion of the chain corresponds to 16–1181; that stretch reads QLSQTNPDCP…PGTPSLALWK (1166 aa). N-linked (GlcNAc...) asparagine; by host glycans are attached at residues N60, N80, N111, N262, N403, N601, N644, N711, N774, N789, N1004, N1028, N1091, N1121, and N1143. The stretch at 1118 to 1169 forms a coiled coil; that stretch reads ININVTFQQQLLQLQEQVDQLNLQTNYTTTEIQSIIDKYNVEIQNALNQIVD. A helical membrane pass occupies residues 1182–1202; it reads VILILIAVVVVIVIIATTIFC. Residues 1203 to 1220 are Intravirion-facing; it reads SVRKNQSELPLQVLSRLR.

The protein belongs to the torovirinae spike protein family. As to quaternary structure, homotrimer.

It localises to the virion membrane. In terms of biological role, mediates the binding of virions to the host cell receptor and is involved in membrane fusion. This is Spike glycoprotein (S) from Blicca bjoerkna (white bream).